Here is a 387-residue protein sequence, read N- to C-terminus: Phosphoglycerate kinase (387 aa).

Substrate contacts are provided by residues 21-23 (DLN), R36, 59-62 (HLGR), R113, and R146. ATP-binding positions include K197, E314, and 340-343 (GGDT).

This sequence belongs to the phosphoglycerate kinase family. Monomer.

The protein resides in the cytoplasm. The enzyme catalyses (2R)-3-phosphoglycerate + ATP = (2R)-3-phospho-glyceroyl phosphate + ADP. Its pathway is carbohydrate degradation; glycolysis; pyruvate from D-glyceraldehyde 3-phosphate: step 2/5. The sequence is that of Phosphoglycerate kinase from Alcanivorax borkumensis (strain ATCC 700651 / DSM 11573 / NCIMB 13689 / SK2).